The sequence spans 518 residues: 2-isopropylmalate synthase (518 aa).

The 263-residue stretch at 4–266 (INVFDTTLRD…DSSLNLHELK (263 aa)) folds into the Pyruvate carboxyltransferase domain. Asp13, His201, His203, and Asn237 together coordinate Mn(2+). The tract at residues 391 to 518 (EFLSLQVHYG…GLKRQTAVGS (128 aa)) is regulatory domain.

This sequence belongs to the alpha-IPM synthase/homocitrate synthase family. LeuA type 1 subfamily. As to quaternary structure, homodimer. It depends on Mn(2+) as a cofactor.

The protein resides in the cytoplasm. The catalysed reaction is 3-methyl-2-oxobutanoate + acetyl-CoA + H2O = (2S)-2-isopropylmalate + CoA + H(+). It functions in the pathway amino-acid biosynthesis; L-leucine biosynthesis; L-leucine from 3-methyl-2-oxobutanoate: step 1/4. In terms of biological role, catalyzes the condensation of the acetyl group of acetyl-CoA with 3-methyl-2-oxobutanoate (2-ketoisovalerate) to form 3-carboxy-3-hydroxy-4-methylpentanoate (2-isopropylmalate). This Bacillus velezensis (strain DSM 23117 / BGSC 10A6 / LMG 26770 / FZB42) (Bacillus amyloliquefaciens subsp. plantarum) protein is 2-isopropylmalate synthase.